Consider the following 259-residue polypeptide: 5'-nucleotidase SurE (259 aa).

Residues Asp8, Asp9, Ser39, and Asn96 each coordinate a divalent metal cation.

Belongs to the SurE nucleotidase family. The cofactor is a divalent metal cation.

It localises to the cytoplasm. The catalysed reaction is a ribonucleoside 5'-phosphate + H2O = a ribonucleoside + phosphate. Its function is as follows. Nucleotidase that shows phosphatase activity on nucleoside 5'-monophosphates. The chain is 5'-nucleotidase SurE from Pelotomaculum thermopropionicum (strain DSM 13744 / JCM 10971 / SI).